The primary structure comprises 419 residues: MIDLKVLRENPDAVRASQLARGEDPGLVDALADADTARRAAISAADNLRAEQKSASRLVGKASPEERPALLAAAKELADKVRAAESAQAEAEKAYSAAHMAISNVIIDGVPAGGEDDFVVLDTVGEPTALTDPKDHLELGESLGLIDMERGAKVSGSRFYFLTGFGALLQLGLFQLAVRTATENGFTLVIPPVLVRPEIMSGTGFLGAHADEVYRVEADDLYLVGTSEVPLAGYHSGEILDLSEGPKRYAGWSSCFRREAGSYGKDTRGIIRVHQFDKVEGFVYCRPEEAEAEHDRLLGWQRQMLGLIEVPYRVIDIAAGDLGSSAARKFDCEAWVPTQQTYRELTSTSNCTTFQARRLGVRYRDENGKPQTAATLNGTLATTRWLVAILENHQQPDGSVRIPEALVPYVGTEVLTPKN.

226–228 is an L-serine binding site; it reads TSE. ATP is bound by residues 257-259 and V273; that span reads RRE. E280 contacts L-serine. Position 344–347 (344–347) interacts with ATP; sequence ELTS. Residue T379 participates in L-serine binding.

It belongs to the class-II aminoacyl-tRNA synthetase family. Type-1 seryl-tRNA synthetase subfamily. In terms of assembly, homodimer. The tRNA molecule binds across the dimer.

The protein resides in the cytoplasm. The catalysed reaction is tRNA(Ser) + L-serine + ATP = L-seryl-tRNA(Ser) + AMP + diphosphate + H(+). The enzyme catalyses tRNA(Sec) + L-serine + ATP = L-seryl-tRNA(Sec) + AMP + diphosphate + H(+). The protein operates within aminoacyl-tRNA biosynthesis; selenocysteinyl-tRNA(Sec) biosynthesis; L-seryl-tRNA(Sec) from L-serine and tRNA(Sec): step 1/1. Functionally, catalyzes the attachment of serine to tRNA(Ser). Is also able to aminoacylate tRNA(Sec) with serine, to form the misacylated tRNA L-seryl-tRNA(Sec), which will be further converted into selenocysteinyl-tRNA(Sec). The polypeptide is Serine--tRNA ligase (Mycolicibacterium vanbaalenii (strain DSM 7251 / JCM 13017 / BCRC 16820 / KCTC 9966 / NRRL B-24157 / PYR-1) (Mycobacterium vanbaalenii)).